The sequence spans 289 residues: MNLYFLFFISTILAAKPFNSFNKTSLIDEGVDNDDDIVSKRAVVIDYCDTRHPNNLCKKYFEIDSYWNDDTDCFTNIGCKVYGGFDIIGGKAPKIGTVCRLKKGKNKFGYCNSKGNCVERDFIESFGVSIKIKGISHRGDDEPACPLYENTWINYGKCNEPYHCGTNYGLFYANKRKLNYFPDNGQKCNSKYEIYGVCYLGRCHGTGNFSNGEVFSEFGTIFKDVEIVTLSDGKNSSKRGKHKNLHGSKVFDSNGIYDIDPKNWKIEDDDKDITVHENAGDPKSDSRRC.

A signal peptide spans 1–14 (MNLYFLFFISTILA). Positions 15–27 (AKPFNSFNKTSLI) are excised as a propeptide. The disordered stretch occupies residues 270–289 (DKDITVHENAGDPKSDSRRC).

Contains several disulfide bonds. Posterior glands which appear to be connected with the stylet through a series of ducts.

It localises to the secreted. In terms of biological role, has contracting-paralyzing activity in insect larvae. The chain is Toxin tox21A from Pyemotes tritici (Straw itch mite).